The primary structure comprises 432 residues: Sonic hedgehog protein (432 aa).

Positions Met-1–Ser-26 are cleaved as a signal peptide. The N-palmitoyl cysteine moiety is linked to residue Cys-27. The Cardin-Weintraub signature appears at Thr-35–Lys-41. Positions 92, 93, 98, 128, 129, 132, and 134 each coordinate Ca(2+). Zn(2+) is bound by residues His-143, Asp-150, and His-185. A lipid anchor (Cholesterol glycine ester) is attached at Gly-200.

Belongs to the hedgehog family. In terms of assembly, interacts with HHATL/GUP1 which negatively regulates HHAT-mediated palmitoylation of the SHH N-terminus. Interacts with BOC and CDON. Interacts with HHIP. Interacts with DISP1 via its cholesterol anchor. Interacts with SCUBE2. Multimer. Post-translationally, the C-terminal domain displays an autoproteolysis activity and a cholesterol transferase activity. Both activities result in the cleavage of the full-length protein and covalent attachment of a cholesterol moiety to the C-terminal of the newly generated N-terminal fragment (ShhN). Cholesterylation is required for the sonic hedgehog protein N-product targeting to lipid rafts and multimerization. ShhN is the active species in both local and long-range signaling, whereas the C-product (ShhC) is degraded in the reticulum endoplasmic. In terms of processing, N-palmitoylation by HHAT of ShhN is required for sonic hedgehog protein N-product multimerization and full activity. It is a prerequisite for the membrane-proximal positioning and the subsequent shedding of this N-terminal peptide. The lipidated N- and C-terminal peptides of ShhNp can be cleaved (shedding). The N-terminal palmitoylated peptide is cleaved at the Cardin-Weintraub (CW) motif site. The cleavage reduced the interactions with heparan sulfate. The cleavage is enhanced by SCUBE2.

It localises to the endoplasmic reticulum membrane. The protein localises to the golgi apparatus membrane. The protein resides in the cell membrane. It carries out the reaction glycyl-L-cysteinyl-[protein] + cholesterol + H(+) = [protein]-C-terminal glycyl cholesterol ester + N-terminal L-cysteinyl-[protein]. In terms of biological role, the C-terminal part of the sonic hedgehog protein precursor displays an autoproteolysis and a cholesterol transferase activity. Both activities result in the cleavage of the full-length protein into two parts (ShhN and ShhC) followed by the covalent attachment of a cholesterol moiety to the C-terminal of the newly generated ShhN. Both activities occur in the endoplasmic reticulum. Once cleaved, ShhC is degraded in the endoplasmic reticulum. The dually lipidated sonic hedgehog protein N-product (ShhNp) is a morphogen which is essential for a variety of patterning events during development. Induces ventral cell fate in the neural tube and somites. Involved in the patterning of the anterior-posterior axis of the developing limb bud. Essential for axon guidance. Binds to the patched (PTCH1) receptor, which functions in association with smoothened (SMO), to activate the transcription of target genes. In the absence of SHH, PTCH1 represses the constitutive signaling activity of SMO. This is Sonic hedgehog protein from Cynops pyrrhogaster (Japanese fire-bellied newt).